A 429-amino-acid polypeptide reads, in one-letter code: Cleavage stimulation factor subunit 50 (429 aa).

The hydrophobic stretch occupies residues 20 to 41 (LNALIVAHLRHHNLSQVASAVA). WD repeat units lie at residues 121-160 (EHKS…QMIS), 174-213 (DHAE…AKRA), 218-257 (QDTH…CFLP), 264-303 (GVSG…CVRS), 308-347 (HGKS…MVKE), 351-392 (AKRV…KVAK), and 396-429 (NHNG…KESV).

Homodimer. Belongs to the CSTF complex. Forms a complex with cleavage and polyadenylation specificity factor (CPSF) subunits CSTF64, PABN3, CPSF30, FIPS5 and CPSF100.

It localises to the nucleus. One of the multiple factors required for polyadenylation and 3'-end cleavage of pre-mRNAs. May be responsible for the interaction of CSTF with other factors to form a stable complex on the pre-mRNA. The protein is Cleavage stimulation factor subunit 50 of Arabidopsis thaliana (Mouse-ear cress).